A 242-amino-acid chain; its full sequence is Arginine transport ATP-binding protein ArtP (242 aa).

In terms of domain architecture, ABC transporter spans I3 to S241. Residue G35–S42 participates in ATP binding.

Belongs to the ABC transporter superfamily. The complex is composed of two ATP-binding proteins (ArtP), two transmembrane proteins (ArtM and ArtQ) and two solute-binding proteins (ArtJ and ArtI).

It is found in the cell inner membrane. It carries out the reaction a polar amino acid(out) + ATP + H2O = a polar amino acid(in) + ADP + phosphate + H(+). The enzyme catalyses L-arginine(out) + ATP + H2O = L-arginine(in) + ADP + phosphate + H(+). In terms of biological role, part of the ABC transporter complex ArtPIQMJ involved in arginine transport. Probably responsible for energy coupling to the transport system. This Escherichia coli O157:H7 protein is Arginine transport ATP-binding protein ArtP (artP).